A 3511-amino-acid chain; its full sequence is Unconventional myosin-XV (3511 aa).

Disordered regions lie at residues 1–44, 574–690, 712–1030, and 1105–1135; these read MADE…TPKI, KKPI…SLRQ, FAEP…PNKN, and VSSFRPKGPAPVQPPEHPDQDPEQGPAPQAC. Residues 622-634 are compositionally biased toward polar residues; that stretch reads SQPQARNNNNSHG. The span at 654–672 shows a compositional bias: pro residues; sequence PPMPAPSPSPASPLTPPFS. Positions 769 to 792 are enriched in low complexity; it reads PSLRSLPGQGYHSPLGPLSPQLSL. The segment covering 797 to 807 has biased composition (pro residues); the sequence is FQPPFPPPPRR. The region spanning 1206–1883 is the Myosin motor domain; the sequence is DGVEDMTQLE…LHQLLESMRE (678 aa). 1299-1306 serves as a coordination point for ATP; that stretch reads GESGSGKT. The stretch at 1307–1334 forms a coiled coil; the sequence is EATKLILRCLAAMNQRRDVMQQIKILEA. An actin-binding region spans residues 1776-1783; that stretch reads FVRCLKPN. The interval 1872 to 2013 is neck or regulatory domain; sequence EHLHQLLESM…SSGPRVAVVR (142 aa). 2 IQ domains span residues 1886 to 1908 and 1909 to 1938; these read QNRAALTLQRYLRGFFIQRHFRS and LRRKIILLQSRARGFLARQRYQQMRQSLLK. Residues 2014 to 3511 are tail; it reads APRLQAEPCV…TLPPSEITLL (1498 aa). The MyTH4 1 domain maps to 2049–2195; it reads MLTVPLKMPL…PTQLEWTAIQ (147 aa). Disordered regions lie at residues 2330 to 2359, 2392 to 2425, 2460 to 2509, 2565 to 2584, and 2629 to 2648; these read SHKEDGTNGETEAQRWTSNRQAVDSIGEST, YRMKGGGQPGGGGGSTSEDTSRRPPEPKLKPIPG, PLSA…SVAK, KQPPWAGHPEARRTDGGKVF, and RPCMGPTPVQPSRSLEPPED. The span at 2337–2351 shows a compositional bias: polar residues; sequence NGETEAQRWTSNRQA. Gly residues predominate over residues 2395–2406; sequence KGGGQPGGGGGS. The span at 2410-2420 shows a compositional bias: basic and acidic residues; sequence DTSRRPPEPKL. Residues 2573–2584 show a composition bias toward basic and acidic residues; it reads PEARRTDGGKVF. The SH3 domain maps to 2848-2934; the sequence is KDSDYVVAVR…PSELVQPAAA (87 aa). The interval 2964–2984 is disordered; it reads EVGRRREGPPVRARSADSGED. The span at 2965–2980 shows a compositional bias: basic and acidic residues; the sequence is VGRRREGPPVRARSAD. Residues 3031–3185 form the MyTH4 2 domain; that stretch reads FTKVPIQESL…PSNMELRAML (155 aa). The FERM domain occupies 3190–3511; it reads SKRQLFLLPG…TLPPSEITLL (322 aa).

This sequence belongs to the TRAFAC class myosin-kinesin ATPase superfamily. Myosin family. As to quaternary structure, interacts with the third PDZ domain of WHRN which is necessary for localization of WHRN to stereocilium tips. Interacts with FASLG. Interacts with EPS8. As to expression, in the developing inner ear, expressed in cochlea and vestibular apparatus. Expression appears to be restricted to cochlear neurosensory cells and upper epithelial layer of macula saccula. Also expressed in macula utriculi and cristae ampullaris of the semicircular canals. In adult cochlear hair cells, highest expression in stereocilia and apical body.

It is found in the cell projection. Its subcellular location is the stereocilium. The protein localises to the cytoplasm. It localises to the cytoskeleton. Myosins are actin-based motor molecules with ATPase activity. Unconventional myosins serve in intracellular movements. Their highly divergent tails are presumed to bind to membranous compartments, which would be moved relative to actin filaments. Required for the arrangement of stereocilia in mature hair bundles. In Mus musculus (Mouse), this protein is Unconventional myosin-XV (Myo15a).